A 119-amino-acid polypeptide reads, in one-letter code: Large ribosomal subunit protein uL18 (119 aa).

Belongs to the universal ribosomal protein uL18 family. In terms of assembly, part of the 50S ribosomal subunit; part of the 5S rRNA/L5/L18/L25 subcomplex. Contacts the 5S and 23S rRNAs.

Its function is as follows. This is one of the proteins that bind and probably mediate the attachment of the 5S RNA into the large ribosomal subunit, where it forms part of the central protuberance. This is Large ribosomal subunit protein uL18 from Tropheryma whipplei (strain TW08/27) (Whipple's bacillus).